The sequence spans 128 residues: Large ribosomal subunit protein bL20c (128 aa).

It belongs to the bacterial ribosomal protein bL20 family.

It is found in the plastid. It localises to the chloroplast. In terms of biological role, binds directly to 23S ribosomal RNA and is necessary for the in vitro assembly process of the 50S ribosomal subunit. It is not involved in the protein synthesizing functions of that subunit. This chain is Large ribosomal subunit protein bL20c, found in Nicotiana sylvestris (Wood tobacco).